The primary structure comprises 244 residues: UPF0173 metal-dependent hydrolase Rcas_3617 (244 aa).

The protein belongs to the UPF0173 family.

This is UPF0173 metal-dependent hydrolase Rcas_3617 from Roseiflexus castenholzii (strain DSM 13941 / HLO8).